Consider the following 386-residue polypeptide: Succinate--CoA ligase [ADP-forming] subunit beta (386 aa).

One can recognise an ATP-grasp domain in the interval Lys9 to Glu244. ATP contacts are provided by residues Lys46, Gly53 to Gly55, Glu99, Ala102, and Glu107. Asn199 and Asp213 together coordinate Mg(2+). Substrate-binding positions include Asn264 and Gly321 to Met323.

It belongs to the succinate/malate CoA ligase beta subunit family. In terms of assembly, heterotetramer of two alpha and two beta subunits. The cofactor is Mg(2+).

The enzyme catalyses succinate + ATP + CoA = succinyl-CoA + ADP + phosphate. It carries out the reaction GTP + succinate + CoA = succinyl-CoA + GDP + phosphate. It functions in the pathway carbohydrate metabolism; tricarboxylic acid cycle; succinate from succinyl-CoA (ligase route): step 1/1. Its function is as follows. Succinyl-CoA synthetase functions in the citric acid cycle (TCA), coupling the hydrolysis of succinyl-CoA to the synthesis of either ATP or GTP and thus represents the only step of substrate-level phosphorylation in the TCA. The beta subunit provides nucleotide specificity of the enzyme and binds the substrate succinate, while the binding sites for coenzyme A and phosphate are found in the alpha subunit. The protein is Succinate--CoA ligase [ADP-forming] subunit beta of Polaromonas naphthalenivorans (strain CJ2).